The following is a 503-amino-acid chain: Maturase K (503 aa).

It belongs to the intron maturase 2 family. MatK subfamily.

The protein resides in the plastid. It is found in the chloroplast. In terms of biological role, usually encoded in the trnK tRNA gene intron. Probably assists in splicing its own and other chloroplast group II introns. The sequence is that of Maturase K from Vicia villosa (Hairy vetch).